A 633-amino-acid polypeptide reads, in one-letter code: Probable sodium/potassium/calcium exchanger CG1090 (633 aa).

The signal sequence occupies residues 1 to 21 (MWNMGLLFLIYYCVSIYSAKG). Residues 22–111 (DTKDGQVLPL…PLMNKWARQH (90 aa)) lie on the Extracellular side of the membrane. A helical membrane pass occupies residues 112-132 (GGLILHILVAVFTFFGLAIVC). Residues 133-157 (DEYFVASLDRLCEELKLSPDVAGAT) lie on the Cytoplasmic side of the membrane. An Alpha-1 repeat occupies 153 to 193 (VAGATFMAAGSSAPELATVVIGVFFAKDDIGISGVIGSAVF). The chain crosses the membrane as a helical span at residues 158–178 (FMAAGSSAPELATVVIGVFFA). The Extracellular portion of the chain corresponds to 179–181 (KDD). The chain crosses the membrane as a helical span at residues 182 to 202 (IGISGVIGSAVFNIMFVISVC). Residues 203 to 220 (ALCSGTVCQLNWWPLVRD) are Cytoplasmic-facing. Transmembrane regions (helical) follow at residues 221–241 (CFFY…DVIS) and 242–262 (CFES…LHFN). The Extracellular segment spans residues 263–427 (TELERWALGL…EPRRDPLLRP (165 aa)). 3 stretches are compositionally biased toward polar residues: residues 298–310 (YTQE…QGQK), 320–333 (AKPQ…SDPN), and 395–405 (QVVSTQATSAG). The tract at residues 298-422 (YTQESVGQTQ…TDKQREPRRD (125 aa)) is disordered. Over residues 411–422 (KSTDKQREPRRD) the composition is skewed to basic and acidic residues. Residues 428 to 448 (MEGGLPALVSWYVVYPIHFLC) traverse the membrane as a helical segment. Residues 449–468 (KKTMPDCRQEQYRNWYPFTF) are Cytoplasmic-facing. Residues 469–489 (LMSMVWISFYSYFMVWMITVI) traverse the membrane as a helical segment. Residues 490 to 500 (GSTLAIPDTVM) lie on the Extracellular side of the membrane. A helical transmembrane segment spans residues 501-521 (GLTFVAAGVSVPDALSSIAVI). An Alpha-2 repeat occupies 506–537 (AAGVSVPDALSSIAVIKEGFGDMAVSNAIGSN). Over 522–535 (KEGFGDMAVSNAIG) the chain is Cytoplasmic. Residues 536 to 556 (SNVFDILVCLGLPWFIQTAII) form a helical membrane-spanning segment. Residues 557–568 (KPGSHVNVISKG) lie on the Extracellular side of the membrane. Residues 569–589 (LAYSTLSLFSTVVFLILSTHL) traverse the membrane as a helical segment. At 590-597 (NGWKLDKR) the chain is on the cytoplasmic side. Residues 598–618 (LGIILMVWYLFFITLASLYEL) form a helical membrane-spanning segment. The Extracellular portion of the chain corresponds to 619 to 633 (NVFGYMNPPECPSTY).

Belongs to the Ca(2+):cation antiporter (CaCA) (TC 2.A.19) family. SLC24A subfamily.

The protein localises to the membrane. May function in the removal and maintenance of calcium homeostasis. Transports one Ca(2+) and 1 K(+) in exchange for 4 Na(+). This is Probable sodium/potassium/calcium exchanger CG1090 from Drosophila melanogaster (Fruit fly).